The chain runs to 280 residues: Probable protein VP2 (280 aa).

Disordered stretches follow at residues 46 to 167 (LGAG…FFTS) and 200 to 280 (AQLS…TYSN). Pro residues predominate over residues 65–81 (PEGPGGPPQHAPPNPPP). A compositionally biased stretch (gly residues) spans 90–100 (RGGGAGGAGDG). Residues 106-117 (DAAEEYGPEDLD) show a composition bias toward acidic residues. The span at 227-251 (AKTRRRVKKKPLSSKNKHTKKKKRS) shows a compositional bias: basic residues. A compositionally biased stretch (low complexity) spans 252 to 266 (YSSSSPSSKDNTSES).

Phosphorylated at C-terminal serines.

In Homo sapiens (Human), this protein is Probable protein VP2.